The chain runs to 224 residues: UPF0758 protein Hhal_2301 (224 aa).

One can recognise an MPN domain in the interval 102–224; it reads TLSSPAQTRT…PVSLAERGVL (123 aa). Residues His-173, His-175, and Asp-186 each contribute to the Zn(2+) site. A JAMM motif motif is present at residues 173-186; it reads HNHPSGITEPSAAD.

The protein belongs to the UPF0758 family.

This chain is UPF0758 protein Hhal_2301, found in Halorhodospira halophila (strain DSM 244 / SL1) (Ectothiorhodospira halophila (strain DSM 244 / SL1)).